Reading from the N-terminus, the 468-residue chain is Phosphomethylpyrimidine synthase (468 aa).

Residues N80, M109, Y138, H173, 193–195 (SRG), 234–237 (DGLR), and E273 each bind substrate. H277 provides a ligand contact to Zn(2+). Y300 provides a ligand contact to substrate. H341 is a Zn(2+) binding site. 3 residues coordinate [4Fe-4S] cluster: C421, C424, and C429.

It belongs to the ThiC family. In terms of assembly, homodimer. [4Fe-4S] cluster serves as cofactor.

It carries out the reaction 5-amino-1-(5-phospho-beta-D-ribosyl)imidazole + S-adenosyl-L-methionine = 4-amino-2-methyl-5-(phosphooxymethyl)pyrimidine + CO + 5'-deoxyadenosine + formate + L-methionine + 3 H(+). Its pathway is cofactor biosynthesis; thiamine diphosphate biosynthesis. In terms of biological role, catalyzes the synthesis of the hydroxymethylpyrimidine phosphate (HMP-P) moiety of thiamine from aminoimidazole ribotide (AIR) in a radical S-adenosyl-L-methionine (SAM)-dependent reaction. The sequence is that of Phosphomethylpyrimidine synthase from Anaeromyxobacter sp. (strain Fw109-5).